A 362-amino-acid chain; its full sequence is Chorismate synthase (362 aa).

Arg-46 is an NADP(+) binding site. FMN-binding positions include 122-124 (RSS), 238-239 (NA), Gly-278, 293-297 (KPTPS), and Arg-319.

Belongs to the chorismate synthase family. In terms of assembly, homotetramer. It depends on FMNH2 as a cofactor.

It carries out the reaction 5-O-(1-carboxyvinyl)-3-phosphoshikimate = chorismate + phosphate. The protein operates within metabolic intermediate biosynthesis; chorismate biosynthesis; chorismate from D-erythrose 4-phosphate and phosphoenolpyruvate: step 7/7. Catalyzes the anti-1,4-elimination of the C-3 phosphate and the C-6 proR hydrogen from 5-enolpyruvylshikimate-3-phosphate (EPSP) to yield chorismate, which is the branch point compound that serves as the starting substrate for the three terminal pathways of aromatic amino acid biosynthesis. This reaction introduces a second double bond into the aromatic ring system. In Campylobacter jejuni subsp. doylei (strain ATCC BAA-1458 / RM4099 / 269.97), this protein is Chorismate synthase.